Here is a 222-residue protein sequence, read N- to C-terminus: UPF0502 protein SO_1867 (222 aa).

Residues 169–193 are compositionally biased toward polar residues; the sequence is EQVSATSLSADSPSADSNSLNAQDR. The disordered stretch occupies residues 169-195; it reads EQVSATSLSADSPSADSNSLNAQDRQQ.

Belongs to the UPF0502 family.

This chain is UPF0502 protein SO_1867, found in Shewanella oneidensis (strain ATCC 700550 / JCM 31522 / CIP 106686 / LMG 19005 / NCIMB 14063 / MR-1).